The chain runs to 290 residues: Large ribosomal subunit protein uL3 (290 aa).

Q152 carries the N5-methylglutamine modification. Residues 250–290 (ARLAEEQAAAEAESLAQAEAEIAAEGSDAAPEGDADKKDGE) are disordered. Residues 255–274 (EQAAAEAESLAQAEAEIAAE) show a composition bias toward low complexity.

This sequence belongs to the universal ribosomal protein uL3 family. In terms of assembly, part of the 50S ribosomal subunit. Forms a cluster with proteins L14 and L19. Post-translationally, methylated by PrmB.

Its function is as follows. One of the primary rRNA binding proteins, it binds directly near the 3'-end of the 23S rRNA, where it nucleates assembly of the 50S subunit. The sequence is that of Large ribosomal subunit protein uL3 from Jannaschia sp. (strain CCS1).